The primary structure comprises 358 residues: Probable tartrate dehydrogenase/decarboxylase TtuC' (358 aa).

Mn(2+)-binding residues include Asp222, Asp246, and Asp250.

This sequence belongs to the isocitrate and isopropylmalate dehydrogenases family. The cofactor is Mg(2+). Requires Mn(2+) as cofactor. K(+) serves as cofactor.

The protein localises to the cytoplasm. It catalyses the reaction tartrate + NAD(+) = 2-hydroxy-3-oxosuccinate + NADH + H(+). The catalysed reaction is (2R,3S)-tartrate + NAD(+) = 2-hydroxy-3-oxosuccinate + NADH + H(+). The enzyme catalyses (2R,3R)-tartrate + NAD(+) = 2-hydroxy-3-oxosuccinate + NADH + H(+). It carries out the reaction (2R,3R)-tartrate + H(+) = (R)-glycerate + CO2. It catalyses the reaction (R)-malate + NAD(+) = pyruvate + CO2 + NADH. Its pathway is carbohydrate acid metabolism; tartrate degradation; 2-hydroxy-3-oxosuccinate from L-tartrate: step 1/1. It functions in the pathway carbohydrate acid metabolism; tartrate degradation; 2-hydroxy-3-oxosuccinate from meso-tartrate: step 1/1. The protein operates within carbohydrate acid metabolism; tartrate degradation; D-glycerate from L-tartrate: step 1/1. In terms of biological role, has multiple catalytic activities. Apart from catalyzing the oxidation of (+)-tartrate to oxaloglycolate, also converts meso-tartrate to D-glycerate and catalyzes the oxidative decarboxylation of D-malate to pyruvate. The chain is Probable tartrate dehydrogenase/decarboxylase TtuC' (ttuC') from Agrobacterium vitis (Rhizobium vitis).